The primary structure comprises 219 residues: ATP-dependent dethiobiotin synthetase BioD (219 aa).

14–19 (DVGKTY) lines the ATP pocket. Threonine 18 provides a ligand contact to Mg(2+). Lysine 37 is an active-site residue. Serine 41 lines the substrate pocket. ATP is bound by residues aspartate 54, 114-117 (EGAG), and 175-176 (NN). Mg(2+) contacts are provided by aspartate 54 and glutamate 114.

It belongs to the dethiobiotin synthetase family. Homodimer. Mg(2+) is required as a cofactor.

The protein localises to the cytoplasm. It carries out the reaction (7R,8S)-7,8-diammoniononanoate + CO2 + ATP = (4R,5S)-dethiobiotin + ADP + phosphate + 3 H(+). It participates in cofactor biosynthesis; biotin biosynthesis; biotin from 7,8-diaminononanoate: step 1/2. In terms of biological role, catalyzes a mechanistically unusual reaction, the ATP-dependent insertion of CO2 between the N7 and N8 nitrogen atoms of 7,8-diaminopelargonic acid (DAPA, also called 7,8-diammoniononanoate) to form a ureido ring. This Fusobacterium nucleatum subsp. nucleatum (strain ATCC 25586 / DSM 15643 / BCRC 10681 / CIP 101130 / JCM 8532 / KCTC 2640 / LMG 13131 / VPI 4355) protein is ATP-dependent dethiobiotin synthetase BioD.